We begin with the raw amino-acid sequence, 310 residues long: Nucleotide-binding protein Ddes_0972 (310 aa).

An ATP-binding site is contributed by 30 to 37 (GLSGAGKS). 82 to 85 (DLRQ) contributes to the GTP binding site.

Belongs to the RapZ-like family.

In terms of biological role, displays ATPase and GTPase activities. The polypeptide is Nucleotide-binding protein Ddes_0972 (Desulfovibrio desulfuricans (strain ATCC 27774 / DSM 6949 / MB)).